We begin with the raw amino-acid sequence, 431 residues long: Probable zinc metalloprotease Lema_P086240 (431 aa).

N46 carries N-linked (GlcNAc...) asparagine glycosylation. Zn(2+) contacts are provided by H117, D137, and E170. Residue N185 is glycosylated (N-linked (GlcNAc...) asparagine). Residue D197 coordinates Zn(2+). 5 N-linked (GlcNAc...) asparagine glycosylation sites follow: N258, N310, N349, N359, and N369. The region spanning 344 to 431 is the Fibronectin type-III domain; that stretch reads PGMPRNVTID…KSPAVYPFPG (88 aa).

Belongs to the peptidase M28 family. M28B subfamily. Zn(2+) is required as a cofactor.

The protein resides in the secreted. The protein is Probable zinc metalloprotease Lema_P086240 of Leptosphaeria maculans (strain JN3 / isolate v23.1.3 / race Av1-4-5-6-7-8) (Blackleg fungus).